A 518-amino-acid polypeptide reads, in one-letter code: GMP synthase [glutamine-hydrolyzing] (518 aa).

The Glutamine amidotransferase type-1 domain occupies 11–203 (KIIVLDFGSQ…AFDVCQARSN (193 aa)). The active-site Nucleophile is the Cys-88. Catalysis depends on residues His-177 and Glu-179. The GMPS ATP-PPase domain maps to 204-393 (WSMDDFIDMQ…LGMPHELVWR (190 aa)). An ATP-binding site is contributed by 231 to 237 (SGGVDSS).

In terms of assembly, homodimer.

The catalysed reaction is XMP + L-glutamine + ATP + H2O = GMP + L-glutamate + AMP + diphosphate + 2 H(+). The protein operates within purine metabolism; GMP biosynthesis; GMP from XMP (L-Gln route): step 1/1. Functionally, catalyzes the synthesis of GMP from XMP. This chain is GMP synthase [glutamine-hydrolyzing], found in Ligilactobacillus salivarius (strain UCC118) (Lactobacillus salivarius).